A 314-amino-acid chain; its full sequence is Mitochondrial 2-oxoglutarate/malate carrier protein (314 aa).

Ala-2 bears the N-acetylalanine mark. Ser-6 bears the Phosphoserine mark. 3 Solcar repeats span residues 23–108 (VKFL…LFER), 117–208 (PGFL…SKQF), and 217–306 (DNIL…MNKA). A helical transmembrane segment spans residues 24-42 (KFLFGGLAGMGATVFVQPL). The residue at position 57 (Lys-57) is an N6-succinyllysine. Position 73 is an N6-acetyllysine (Lys-73). The chain crosses the membrane as a helical span at residues 83–101 (GLSAGLLRQATYTTTRLGI). Phosphotyrosine is present on Tyr-102. A run of 3 helical transmembrane segments spans residues 119–140 (FLLKAVIGMTAGATGAFVGTPA), 183–202 (GCIPTMARAVVVNAAQLASY), and 222–240 (HFCASMISGLVTTAASMPV). N6-acetyllysine is present on Lys-256. Residues 281 to 300 (GFTPYYARLGPHTVLTFIFL) traverse the membrane as a helical segment.

This sequence belongs to the mitochondrial carrier (TC 2.A.29) family. As to quaternary structure, interacts with SMIM26. In terms of tissue distribution, most highly expressed in the heart.

The protein localises to the mitochondrion inner membrane. The enzyme catalyses (S)-malate(in) + 2-oxoglutarate(out) = (S)-malate(out) + 2-oxoglutarate(in). It carries out the reaction malonate(in) + 2-oxoglutarate(out) = malonate(out) + 2-oxoglutarate(in). It catalyses the reaction succinate(in) + 2-oxoglutarate(out) = succinate(out) + 2-oxoglutarate(in). The catalysed reaction is maleate(in) + 2-oxoglutarate(out) = maleate(out) + 2-oxoglutarate(in). The enzyme catalyses oxaloacetate(in) + 2-oxoglutarate(out) = oxaloacetate(out) + 2-oxoglutarate(in). Its function is as follows. Catalyzes the transport of 2-oxoglutarate (alpha-oxoglutarate) across the inner mitochondrial membrane in an electroneutral exchange for malate. Can also exchange 2-oxoglutarate for other dicarboxylic acids such as malonate, succinate, maleate and oxaloacetate, although with lower affinity. Contributes to several metabolic processes, including the malate-aspartate shuttle, the oxoglutarate/isocitrate shuttle, in gluconeogenesis from lactate, and in nitrogen metabolism. Maintains mitochondrial fusion and fission events, and the organization and morphology of cristae. Involved in the regulation of apoptosis. Helps protect from cytotoxic-induced apoptosis by modulating glutathione levels in mitochondria. The chain is Mitochondrial 2-oxoglutarate/malate carrier protein (SLC25A11) from Homo sapiens (Human).